The chain runs to 89 residues: Barrier-to-autointegration factor (89 aa).

Residue Met1 is modified to N-acetylmethionine. At Thr2 the chain carries N-acetylthreonine; in Barrier-to-autointegration factor, N-terminally processed. Phosphothreonine; by VRK1 and VRK2 is present on residues Thr2 and Thr3. Ser4 carries the post-translational modification Phosphoserine; by VRK1 and VRK2. Residues Val20–Glu35 enclose the HhH domain.

It belongs to the BAF family. As to quaternary structure, homodimer. Heterodimerizes with BANF2. Interacts with ANKLE2/LEM4, leading to decreased phosphorylation by VRK1 and promoting dephosphorylation by protein phosphatase 2A (PP2A). Binds non-specifically to double-stranded DNA, and is found as a hexamer or dodecamer upon DNA binding. Binds to LEM domain-containing nuclear proteins such as LEMD3/MAN1, TMPO/LAP2 and EMD (emerin). Interacts with ANKLE1 (via LEM domain); the interaction may favor BANF1 dimerization. Interacts with CRX and LMNA (lamin-A). Binds linker histone H1.1 and core histones H3. Interacts with LEMD2 (via LEM domain). Interacts with PARP1; interaction takes place in response to oxidative DNA damage. In terms of processing, ser-4 is the major site of phosphorylation as compared to Thr-2 and Thr-3. Phosphorylation on Thr-2; Thr-3 and Ser-4 disrupts its ability to bind DNA and reduces its ability to bind LEM domain-containing proteins. Non phosphorylated BAF seems to enhance binding between EMD and LMNA. Dephosphorylated by protein phosphatase 2A (PP2A) following interaction with ANKLE2/LEM4 during mitotic exit, leading to mitotic nuclear envelope reassembly.

It is found in the nucleus. The protein resides in the chromosome. Its subcellular location is the nucleus envelope. The protein localises to the cytoplasm. Its function is as follows. Non-specific DNA-binding protein that plays key roles in mitotic nuclear reassembly, chromatin organization, DNA damage response, gene expression and intrinsic immunity against foreign DNA. Contains two non-specific double-stranded DNA (dsDNA)-binding sites which promote DNA cross-bridging. Plays a key role in nuclear membrane reformation at the end of mitosis by driving formation of a single nucleus in a spindle-independent manner. Transiently cross-bridges anaphase chromosomes via its ability to bridge distant DNA sites, leading to the formation of a dense chromatin network at the chromosome ensemble surface that limits membranes to the surface. Also acts as a negative regulator of innate immune activation by restricting CGAS activity toward self-DNA upon acute loss of nuclear membrane integrity. Outcompetes CGAS for DNA-binding, thereby preventing CGAS activation and subsequent damaging autoinflammatory responses. Also involved in DNA damage response: interacts with PARP1 in response to oxidative stress, thereby inhibiting the ADP-ribosyltransferase activity of PARP1. Involved in the recognition of exogenous dsDNA in the cytosol: associates with exogenous dsDNA immediately after its appearance in the cytosol at endosome breakdown and is required to avoid autophagy. In case of poxvirus infection, has an antiviral activity by blocking viral DNA replication. The chain is Barrier-to-autointegration factor (BANF1) from Bos taurus (Bovine).